Reading from the N-terminus, the 240-residue chain is UDP-2,3-diacylglucosamine hydrolase (240 aa).

Mn(2+)-binding residues include Asp7, His9, Asp40, Asn78, and His113. A substrate-binding site is contributed by 78–79 (NR). Residues Asp121, Ser159, Thr163, Lys166, and His194 each coordinate substrate. Positions 194 and 196 each coordinate Mn(2+).

The protein belongs to the LpxH family. Mn(2+) serves as cofactor.

It is found in the cell inner membrane. The enzyme catalyses UDP-2-N,3-O-bis[(3R)-3-hydroxytetradecanoyl]-alpha-D-glucosamine + H2O = 2-N,3-O-bis[(3R)-3-hydroxytetradecanoyl]-alpha-D-glucosaminyl 1-phosphate + UMP + 2 H(+). It participates in glycolipid biosynthesis; lipid IV(A) biosynthesis; lipid IV(A) from (3R)-3-hydroxytetradecanoyl-[acyl-carrier-protein] and UDP-N-acetyl-alpha-D-glucosamine: step 4/6. Its function is as follows. Hydrolyzes the pyrophosphate bond of UDP-2,3-diacylglucosamine to yield 2,3-diacylglucosamine 1-phosphate (lipid X) and UMP by catalyzing the attack of water at the alpha-P atom. Involved in the biosynthesis of lipid A, a phosphorylated glycolipid that anchors the lipopolysaccharide to the outer membrane of the cell. This Pseudomonas putida (strain W619) protein is UDP-2,3-diacylglucosamine hydrolase.